The primary structure comprises 101 residues: Small ribosomal subunit protein uS14 (101 aa).

The interval 36–61 (ASAEDRRAARQKLQSLPRNSSPVRQR) is disordered. A compositionally biased stretch (polar residues) spans 47-59 (KLQSLPRNSSPVR).

This sequence belongs to the universal ribosomal protein uS14 family. Part of the 30S ribosomal subunit. Contacts proteins S3 and S10.

Its function is as follows. Binds 16S rRNA, required for the assembly of 30S particles and may also be responsible for determining the conformation of the 16S rRNA at the A site. The chain is Small ribosomal subunit protein uS14 from Methylobacillus flagellatus (strain ATCC 51484 / DSM 6875 / VKM B-1610 / KT).